The sequence spans 652 residues: Probable L-type lectin-domain containing receptor kinase S.5 (652 aa).

Residues 1–20 form the signal peptide; sequence MRFSLAWKLLFLILTCKIET. Residues 21–266 lie on the Extracellular side of the membrane; that stretch reads QVKCLKFDFP…EGLKIDGDGN (246 aa). The interval 24 to 257 is legume-lectin like; the sequence is CLKFDFPGFN…LNCVRSWSFE (234 aa). N-linked (GlcNAc...) asparagine glycosylation is found at Asn-33, Asn-91, Asn-97, Asn-100, Asn-122, Asn-139, Asn-201, and Asn-244. Residues 267–287 form a helical membrane-spanning segment; that stretch reads MLWLWITIPIVFIVGIGAFLG. Topologically, residues 288 to 652 are cytoplasmic; sequence ALYLRSRSKA…INSLTELTGR (365 aa). A Protein kinase domain is found at 330–622; that stretch reads FGAENKLGQG…PDVPTERPAF (293 aa). ATP-binding positions include 336–344 and Lys-357; that span reads LGQGGFGMV. Asp-455 functions as the Proton acceptor in the catalytic mechanism.

The protein in the C-terminal section; belongs to the protein kinase superfamily. Ser/Thr protein kinase family. This sequence in the N-terminal section; belongs to the leguminous lectin family.

The protein resides in the cell membrane. It catalyses the reaction L-seryl-[protein] + ATP = O-phospho-L-seryl-[protein] + ADP + H(+). It carries out the reaction L-threonyl-[protein] + ATP = O-phospho-L-threonyl-[protein] + ADP + H(+). This chain is Probable L-type lectin-domain containing receptor kinase S.5 (LECRKS5), found in Arabidopsis thaliana (Mouse-ear cress).